The chain runs to 132 residues: Ribonuclease P protein component (132 aa).

Belongs to the RnpA family. As to quaternary structure, consists of a catalytic RNA component (M1 or rnpB) and a protein subunit.

It carries out the reaction Endonucleolytic cleavage of RNA, removing 5'-extranucleotides from tRNA precursor.. Its function is as follows. RNaseP catalyzes the removal of the 5'-leader sequence from pre-tRNA to produce the mature 5'-terminus. It can also cleave other RNA substrates such as 4.5S RNA. The protein component plays an auxiliary but essential role in vivo by binding to the 5'-leader sequence and broadening the substrate specificity of the ribozyme. In Marinobacter nauticus (strain ATCC 700491 / DSM 11845 / VT8) (Marinobacter aquaeolei), this protein is Ribonuclease P protein component.